The chain runs to 313 residues: N-acetyl-gamma-glutamyl-phosphate reductase (313 aa).

Cys-117 is a catalytic residue.

The protein belongs to the NAGSA dehydrogenase family. Type 2 subfamily.

It localises to the cytoplasm. The catalysed reaction is N-acetyl-L-glutamate 5-semialdehyde + phosphate + NADP(+) = N-acetyl-L-glutamyl 5-phosphate + NADPH + H(+). Its pathway is amino-acid biosynthesis; L-arginine biosynthesis; N(2)-acetyl-L-ornithine from L-glutamate: step 3/4. Its function is as follows. Catalyzes the NADPH-dependent reduction of N-acetyl-5-glutamyl phosphate to yield N-acetyl-L-glutamate 5-semialdehyde. The sequence is that of N-acetyl-gamma-glutamyl-phosphate reductase from Burkholderia cenocepacia (strain ATCC BAA-245 / DSM 16553 / LMG 16656 / NCTC 13227 / J2315 / CF5610) (Burkholderia cepacia (strain J2315)).